The primary structure comprises 184 residues: Fe/S biogenesis protein NfuA (184 aa).

Residues Cys142 and Cys145 each contribute to the [4Fe-4S] cluster site.

It belongs to the NfuA family. In terms of assembly, homodimer. The cofactor is [4Fe-4S] cluster.

Its function is as follows. Involved in iron-sulfur cluster biogenesis. Binds a 4Fe-4S cluster, can transfer this cluster to apoproteins, and thereby intervenes in the maturation of Fe/S proteins. Could also act as a scaffold/chaperone for damaged Fe/S proteins. The sequence is that of Fe/S biogenesis protein NfuA from Wigglesworthia glossinidia brevipalpis.